We begin with the raw amino-acid sequence, 748 residues long: MVLLRVLILLLSWAAGMGGQYGNPLNKYIRHYEGLSYNVDSLHQKHQRAKRAVSHEDQFLRLDFHAHGRHFNLRMKRDTSLFSDEFKVETSNKVLDYDTSHIYTGHIYGEEGSFSHGSVIDGRFEGFIQTRGGTFYVEPAERYIKDRTLPFHSVIYHEDDINYPHKYGPQGGCADHSVFERMRKYQMTGVEEVTQIPQEEHAANGPELLRKKRTTSAEKNTCQLYIQTDHLFFKYYGTREAVIAQISSHVKAIDTIYQTTDFSGIRNISFMVKRIRINTTADEKDPTNPFRFPNIGVEKFLELNSEQNHDDYCLAYVFTDRDFDDGVLGLAWVGAPSGSSGGICEKSKLYSDGKKKSLNTGIITVQNYGSHVPPKVSHITFAHEVGHNFGSPHDSGTECTPGESKNLGQKENGNYIMYARATSGDKLNNNKFSLCSIRNISQVLEKKRNNCFVESGQPICGNGMVEQGEECDCGYSDQCKDECCFDANQPEGRKCKLKPGKQCSPSQGPCCTAQCAFKSKSEKCRDDSDCAREGICNGFTALCPASDPKPNFTDCNRHTQVCINGQCAGSICEKYGLEECTCASSDGKDDKELCHVCCMKKMDPSTCASTGSVQWSRHFSGRTITLQPGSPCNDFRGYCDVFMRCRLVDADGPLARLKKAIFSPELYENIAEWIVAHWWAVLLMGIALIMLMAGFIKICSVHTPSSNPKLPPPKPLPGTLKRRRPPQPIQQPQRQRPRESYQMGHMRR.

A signal peptide spans 1–19; the sequence is MVLLRVLILLLSWAAGMGG. Residues 20–213 constitute a propeptide that is removed on maturation; sequence QYGNPLNKYI…NGPELLRKKR (194 aa). Residues 20–672 are Extracellular-facing; sequence QYGNPLNKYI…SPELYENIAE (653 aa). Positions 171 to 178 match the Cysteine switch motif; it reads GGCADHSV. Position 173 (cysteine 173) interacts with Zn(2+). The Peptidase M12B domain maps to 220–456; the sequence is NTCQLYIQTD…KRNNCFVESG (237 aa). 17 disulfides stabilise this stretch: cysteine 222/cysteine 313, cysteine 344/cysteine 451, cysteine 399/cysteine 435, cysteine 460/cysteine 495, cysteine 471/cysteine 484, cysteine 473/cysteine 479, cysteine 483/cysteine 515, cysteine 503/cysteine 511, cysteine 510/cysteine 536, cysteine 524/cysteine 543, cysteine 530/cysteine 562, cysteine 555/cysteine 567, cysteine 572/cysteine 598, cysteine 580/cysteine 607, cysteine 582/cysteine 597, cysteine 594/cysteine 639, and cysteine 632/cysteine 645. Asparagine 267 and asparagine 278 each carry an N-linked (GlcNAc...) asparagine glycan. Histidine 383 contributes to the Zn(2+) binding site. The active site involves glutamate 384. The Zn(2+) site is built by histidine 387 and histidine 393. Asparagine 439 carries an N-linked (GlcNAc...) asparagine glycan. The Disintegrin domain occupies 457-551; sequence QPICGNGMVE…LCPASDPKPN (95 aa). A glycan (N-linked (GlcNAc...) asparagine) is linked at asparagine 551. A helical membrane pass occupies residues 673–693; sequence WIVAHWWAVLLMGIALIMLMA. The Cytoplasmic portion of the chain corresponds to 694 to 748; the sequence is GFIKICSVHTPSSNPKLPPPKPLPGTLKRRRPPQPIQQPQRQRPRESYQMGHMRR. The disordered stretch occupies residues 704–748; the sequence is PSSNPKLPPPKPLPGTLKRRRPPQPIQQPQRQRPRESYQMGHMRR. An SH3-binding motif is present at residues 708-715; the sequence is PKLPPPKP. Threonine 719 carries the post-translational modification Phosphothreonine; by FAM20C. Positions 722–728 match the SH3-binding motif; that stretch reads RRRPPQP. An interaction with AP2A1, AP2A2 and AP2M1 region spans residues 734–748; sequence RQRPRESYQMGHMRR.

As to quaternary structure, forms a ternary EFNA5-EPHA3-ADAM10 complex mediating EFNA5 extracellular domain shedding by ADAM10 which regulates the EFNA5-EPHA3 complex internalization and function, the cleavage occurs in trans, with ADAM10 and its substrate being on the membranes of opposing cells. Interacts with the clathrin adapter AP2 complex subunits AP2A1, AP2A2, AP2B1, and AP2M1; this interaction facilitates ADAM10 endocytosis from the plasma membrane during long-term potentiation in hippocampal neurons. Forms a ternary complex composed of ADAM10, EPHA4 and CADH1; within the complex, ADAM10 cleaves CADH1 which disrupts adherens junctions. Interacts with EPHA2. Interacts with NGF in a divalent cation-dependent manner. Interacts with TSPAN14; the interaction promotes ADAM10 maturation and cell surface expression. Interacts with TSPAN5, TSPAN10, TSPAN14, TSPAN15, TSPAN17 and TSPAN33; these interactions regulate ADAM10 substrate specificity, endocytosis and turnover. Interacts (via extracellular domain) with TSPAN33 (via extracellular domain) and (via cytoplasmic domain) with AFDN; interaction with TSPAN33 allows the docking of ADAM10 to zonula adherens through a PDZ11-dependent interaction between TSPAN33 and PLEKHA7 while interaction with AFDN locks ADAM10 at zonula adherens. Interacts with DLG1; this interaction recruits ADAM10 to the cell membrane during long-term depression in hippocampal neurons. Interacts (via extracellular domain) with BACE1 (via extracellular domain). Interacts with FAM171A1. In terms of assembly, (Microbial infection) Interacts with S.aureus hly; this interaction is necessary for toxin pore formation, disruption of focal adhesions and S.aureus hly-mediated cytotoxicity. The cofactor is Zn(2+). In terms of processing, the precursor is cleaved by furin and PCSK7. In terms of tissue distribution, expressed in the brain (at protein level). Expressed in spleen, lymph node, thymus, peripheral blood leukocyte, bone marrow, cartilage, chondrocytes and fetal liver.

It is found in the cell membrane. The protein localises to the golgi apparatus membrane. The protein resides in the cytoplasmic vesicle. Its subcellular location is the clathrin-coated vesicle. It localises to the cell projection. It is found in the axon. The protein localises to the dendrite. The protein resides in the cell junction. Its subcellular location is the adherens junction. It localises to the cytoplasm. The catalysed reaction is Endopeptidase of broad specificity.. With respect to regulation, catalytically inactive when the propeptide is intact and associated with the mature enzyme. The disintegrin and cysteine-rich regions modulate access of substrates to exerts an inhibitory effect on the cleavage of ADAM10 substrates. Functionally, transmembrane metalloprotease which mediates the ectodomain shedding of a myriad of transmembrane proteins, including adhesion proteins, growth factor precursors and cytokines being essential for development and tissue homeostasis. Associates with six members of the tetraspanin superfamily TspanC8 which regulate its exit from the endoplasmic reticulum and its substrate selectivity. Cleaves the membrane-bound precursor of TNF-alpha at '76-Ala-|-Val-77' to its mature soluble form. Responsible for the proteolytical release of soluble JAM3 from endothelial cells surface. Responsible for the proteolytic release of several other cell-surface proteins, including heparin-binding epidermal growth-like factor, ephrin-A2, CD44, CDH2 and for constitutive and regulated alpha-secretase cleavage of amyloid precursor protein (APP). Contributes to the normal cleavage of the cellular prion protein. Involved in the cleavage of the adhesion molecule L1 at the cell surface and in released membrane vesicles, suggesting a vesicle-based protease activity. Also controls the proteolytic processing of Notch and mediates lateral inhibition during neurogenesis. Required for the development of type 1 transitional B cells into marginal zone B cells, probably by cleaving Notch. Responsible for the FasL ectodomain shedding and for the generation of the remnant ADAM10-processed FasL (FasL APL) transmembrane form. Also cleaves the ectodomain of the integral membrane proteins CORIN and ITM2B. Mediates the proteolytic cleavage of LAG3, leading to release the secreted form of LAG3. Mediates the proteolytic cleavage of IL6R and IL11RA, leading to the release of secreted forms of IL6R and IL11RA. Enhances the cleavage of CHL1 by BACE1. Cleaves NRCAM. Cleaves TREM2, resulting in shedding of the TREM2 ectodomain. Involved in the development and maturation of glomerular and coronary vasculature. During development of the cochlear organ of Corti, promotes pillar cell separation by forming a ternary complex with CADH1 and EPHA4 and cleaving CADH1 at adherens junctions. May regulate the EFNA5-EPHA3 signaling. Regulates leukocyte transmigration as a sheddase for the adherens junction protein VE-cadherin/CDH5 in endothelial cells. Its function is as follows. (Microbial infection) Promotes the cytotoxic activity of S.aureus hly by binding to the toxin at zonula adherens and promoting formation of toxin pores. The protein is Disintegrin and metalloproteinase domain-containing protein 10 of Homo sapiens (Human).